Consider the following 409-residue polypeptide: Histidine--tRNA ligase (409 aa).

Belongs to the class-II aminoacyl-tRNA synthetase family.

The protein resides in the cytoplasm. The catalysed reaction is tRNA(His) + L-histidine + ATP = L-histidyl-tRNA(His) + AMP + diphosphate + H(+). This Methanosphaerula palustris (strain ATCC BAA-1556 / DSM 19958 / E1-9c) protein is Histidine--tRNA ligase.